A 248-amino-acid polypeptide reads, in one-letter code: DNA repair protein RecO (248 aa).

It belongs to the RecO family.

Its function is as follows. Involved in DNA repair and RecF pathway recombination. This Bradyrhizobium sp. (strain BTAi1 / ATCC BAA-1182) protein is DNA repair protein RecO.